The chain runs to 305 residues: Homoserine O-acetyltransferase (305 aa).

Catalysis depends on Cys132, which acts as the Acyl-thioester intermediate. Lys153 and Ser181 together coordinate substrate. The active-site Proton acceptor is the His221. Glu223 is an active-site residue. Arg235 contacts substrate.

The protein belongs to the MetA family.

The protein resides in the cytoplasm. The catalysed reaction is L-homoserine + acetyl-CoA = O-acetyl-L-homoserine + CoA. It functions in the pathway amino-acid biosynthesis; L-methionine biosynthesis via de novo pathway; O-acetyl-L-homoserine from L-homoserine: step 1/1. Transfers an acetyl group from acetyl-CoA to L-homoserine, forming acetyl-L-homoserine. This Leuconostoc mesenteroides subsp. mesenteroides (strain ATCC 8293 / DSM 20343 / BCRC 11652 / CCM 1803 / JCM 6124 / NCDO 523 / NBRC 100496 / NCIMB 8023 / NCTC 12954 / NRRL B-1118 / 37Y) protein is Homoserine O-acetyltransferase.